The chain runs to 311 residues: Ribonuclease HIII (311 aa).

One can recognise an RNase H type-2 domain in the interval 95 to 311 (MSIVGSDEVG…NTEKAFRLLK (217 aa)). Residues Asp101, Glu102, and Asp206 each coordinate a divalent metal cation.

It belongs to the RNase HII family. RnhC subfamily. Mn(2+) is required as a cofactor. The cofactor is Mg(2+).

It is found in the cytoplasm. The enzyme catalyses Endonucleolytic cleavage to 5'-phosphomonoester.. In terms of biological role, endonuclease that specifically degrades the RNA of RNA-DNA hybrids. In Bacillus anthracis (strain A0248), this protein is Ribonuclease HIII.